Here is a 367-residue protein sequence, read N- to C-terminus: 2-aminoethylphosphonate--pyruvate transaminase (367 aa).

Lys-194 is modified (N6-(pyridoxal phosphate)lysine).

This sequence belongs to the class-V pyridoxal-phosphate-dependent aminotransferase family. PhnW subfamily. As to quaternary structure, homodimer. Pyridoxal 5'-phosphate is required as a cofactor.

The catalysed reaction is (2-aminoethyl)phosphonate + pyruvate = phosphonoacetaldehyde + L-alanine. Functionally, involved in phosphonate degradation. This is 2-aminoethylphosphonate--pyruvate transaminase from Salmonella gallinarum (strain 287/91 / NCTC 13346).